Here is a 125-residue protein sequence, read N- to C-terminus: Large ribosomal subunit protein bL12 (125 aa).

Belongs to the bacterial ribosomal protein bL12 family. In terms of assembly, homodimer. Part of the ribosomal stalk of the 50S ribosomal subunit. Forms a multimeric L10(L12)X complex, where L10 forms an elongated spine to which 2 to 4 L12 dimers bind in a sequential fashion. Binds GTP-bound translation factors.

In terms of biological role, forms part of the ribosomal stalk which helps the ribosome interact with GTP-bound translation factors. Is thus essential for accurate translation. In Mannheimia succiniciproducens (strain KCTC 0769BP / MBEL55E), this protein is Large ribosomal subunit protein bL12.